The sequence spans 150 residues: Protein Turandot X (150 aa).

The N-terminal stretch at 1–22 (MGLHIGSLLICVFLGILPFATA) is a signal peptide. Positions 127-150 (REEGQSNHANSPTTLPSRIQKMTK) are disordered. Polar residues predominate over residues 132–150 (SNHANSPTTLPSRIQKMTK).

This sequence belongs to the Turandot family.

It is found in the secreted. Functionally, a humoral factor that may play a role in stress tolerance. The polypeptide is Protein Turandot X (Drosophila simulans (Fruit fly)).